Consider the following 200-residue polypeptide: Elongation factor Ts (200 aa).

The involved in Mg(2+) ion dislocation from EF-Tu stretch occupies residues 83–86 (TDFA).

Belongs to the EF-Ts family.

The protein resides in the cytoplasm. Its function is as follows. Associates with the EF-Tu.GDP complex and induces the exchange of GDP to GTP. It remains bound to the aminoacyl-tRNA.EF-Tu.GTP complex up to the GTP hydrolysis stage on the ribosome. In Syntrophobacter fumaroxidans (strain DSM 10017 / MPOB), this protein is Elongation factor Ts.